The sequence spans 242 residues: Probable 2-phosphosulfolactate phosphatase (242 aa).

This sequence belongs to the ComB family. It depends on Mg(2+) as a cofactor.

It carries out the reaction (2R)-O-phospho-3-sulfolactate + H2O = (2R)-3-sulfolactate + phosphate. This Prochlorococcus marinus (strain NATL2A) protein is Probable 2-phosphosulfolactate phosphatase.